The sequence spans 82 residues: Turripeptide Gsp9.2 (82 aa).

Residues 1 to 23 (MMAKLMITVMMVLLLSLQQGADG) form the signal peptide. Residues 24–46 (RSERWRKNQMAASSIMRNLITAR) constitute a propeptide that is removed on maturation. 4-hydroxyproline is present on residues Pro-49 and Pro-50. Disulfide bonds link Cys-53–Cys-68, Cys-58–Cys-72, and Cys-64–Cys-79. Glu-56 is modified (4-carboxyglutamate).

This sequence belongs to the Pg turripeptide superfamily. As to expression, expressed by the venom duct.

It is found in the secreted. The chain is Turripeptide Gsp9.2 from Gemmula speciosa (Splendid gem-turris).